The sequence spans 134 residues: ATP synthase epsilon chain (134 aa).

This sequence belongs to the ATPase epsilon chain family. F-type ATPases have 2 components, CF(1) - the catalytic core - and CF(0) - the membrane proton channel. CF(1) has five subunits: alpha(3), beta(3), gamma(1), delta(1), epsilon(1). CF(0) has three main subunits: a, b and c.

The protein localises to the cellular thylakoid membrane. Produces ATP from ADP in the presence of a proton gradient across the membrane. The chain is ATP synthase epsilon chain from Prochlorococcus marinus (strain MIT 9515).